The chain runs to 193 residues: Potassium-transporting ATPase KdpC subunit (193 aa).

A helical transmembrane segment spans residues 7–27; it reads PLVVLFVVLNAVTGLAYPAVM.

It belongs to the KdpC family. The system is composed of three essential subunits: KdpA, KdpB and KdpC.

Its subcellular location is the cell inner membrane. Its function is as follows. Part of the high-affinity ATP-driven potassium transport (or Kdp) system, which catalyzes the hydrolysis of ATP coupled with the electrogenic transport of potassium into the cytoplasm. This subunit acts as a catalytic chaperone that increases the ATP-binding affinity of the ATP-hydrolyzing subunit KdpB by the formation of a transient KdpB/KdpC/ATP ternary complex. This Burkholderia cenocepacia (strain HI2424) protein is Potassium-transporting ATPase KdpC subunit.